Consider the following 300-residue polypeptide: GTPase Era (300 aa).

The Era-type G domain maps to 6–173 (HSGFVAILGR…IESLVNTLPE (168 aa)). The segment at 14–21 (GRPNVGKS) is G1. 14-21 (GRPNVGKS) provides a ligand contact to GTP. The segment at 40–44 (QTTRN) is G2. The interval 61 to 64 (DTPG) is G3. GTP is bound by residues 61 to 65 (DTPGI) and 123 to 126 (NKID). Positions 123–126 (NKID) are G4. The tract at residues 152–154 (ISA) is G5. A KH type-2 domain is found at 204–281 (TREEVPHSVA…YLELWVKVQP (78 aa)).

This sequence belongs to the TRAFAC class TrmE-Era-EngA-EngB-Septin-like GTPase superfamily. Era GTPase family. Monomer.

It localises to the cytoplasm. The protein resides in the cell membrane. Its function is as follows. An essential GTPase that binds both GDP and GTP, with rapid nucleotide exchange. Plays a role in 16S rRNA processing and 30S ribosomal subunit biogenesis and possibly also in cell cycle regulation and energy metabolism. In Ligilactobacillus salivarius (strain UCC118) (Lactobacillus salivarius), this protein is GTPase Era.